Consider the following 494-residue polypeptide: 4-trimethylaminobutyraldehyde dehydrogenase (494 aa).

Ser-2 carries the post-translational modification N-acetylserine. An N6-acetyllysine; alternate modification is found at Lys-30. The residue at position 30 (Lys-30) is an N6-succinyllysine; alternate. Lys-59 bears the N6-succinyllysine mark. NAD(+) contacts are provided by residues Lys-180 and 232 to 236 (GSVPT). Residue Glu-254 is the Proton acceptor of the active site. Catalysis depends on Cys-288, which acts as the Nucleophile. Residue Lys-298 is modified to N6-acetyllysine. Lys-303 carries the N6-acetyllysine; alternate modification. Lys-303 bears the N6-succinyllysine; alternate mark. Position 344 is an N6-acetyllysine (Lys-344). NAD(+) is bound at residue Glu-391.

Belongs to the aldehyde dehydrogenase family. As to quaternary structure, homotetramer.

The protein resides in the cytoplasm. Its subcellular location is the cytosol. The enzyme catalyses 4-(trimethylamino)butanal + NAD(+) + H2O = 4-(trimethylamino)butanoate + NADH + 2 H(+). The catalysed reaction is an aldehyde + NAD(+) + H2O = a carboxylate + NADH + 2 H(+). It carries out the reaction 4-aminobutanal + NAD(+) + H2O = 4-aminobutanoate + NADH + 2 H(+). It catalyses the reaction formaldehyde + NAD(+) + H2O = formate + NADH + 2 H(+). The enzyme catalyses acetaldehyde + NAD(+) + H2O = acetate + NADH + 2 H(+). The catalysed reaction is imidazole-4-acetaldehyde + NAD(+) + H2O = imidazole-4-acetate + NADH + 2 H(+). It carries out the reaction acrolein + NAD(+) + H2O = acrylate + NADH + 2 H(+). It catalyses the reaction (5-hydroxyindol-3-yl)acetaldehyde + NAD(+) + H2O = (5-hydroxyindol-3-yl)acetate + NADH + 2 H(+). The enzyme catalyses 3,4-dihydroxyphenylacetaldehyde + NAD(+) + H2O = 3,4-dihydroxyphenylacetate + NADH + 2 H(+). The catalysed reaction is spermine monoaldehyde + NAD(+) + H2O = N-(2-carboxyethyl)spermidine + NADH + 2 H(+). It carries out the reaction propanal + NAD(+) + H2O = propanoate + NADH + 2 H(+). It catalyses the reaction butanal + NAD(+) + H2O = butanoate + NADH + 2 H(+). The enzyme catalyses pentanal + NAD(+) + H2O = pentanoate + NADH + 2 H(+). The catalysed reaction is hexanal + NAD(+) + H2O = hexanoate + NADH + 2 H(+). The protein operates within amine and polyamine biosynthesis; carnitine biosynthesis. Functionally, converts gamma-trimethylaminobutyraldehyde into gamma-butyrobetaine with high efficiency (in vitro). Can catalyze the irreversible oxidation of a broad range of aldehydes to the corresponding acids in an NAD-dependent reaction, but with low efficiency. Catalyzes the oxidation of aldehydes arising from biogenic amines and polyamines. This chain is 4-trimethylaminobutyraldehyde dehydrogenase (ALDH9A1), found in Sus scrofa (Pig).